The sequence spans 361 residues: MPPPKKFRVQSKNYFLTYPQCSLSKEEALSQLQNLNTPVNKKFIKICRELHENGEPHLHVLVQFEGKYQCTNNRFFDLVSPTRSAHFHPNIQGAKSSSDVKSYIDKDGDTIEWGDFQIDGRSARGGQQSANDSYAKALNAGSVQSALAVLREEQPKDFVLQNHNIRSNLERIFAKAPEPWVPPFQVSSFTNVPDEMQEWADNYFGTGDAAPPDRPVSIIVEGDSRTGKTMWARALGPHNYLSGHLDFNGRVFSNDVQYNVIDDIAPHYLKLKHWKELLGAQKDWQSNCKYGKPVQIKGGIPAIVLCNPGEGASYKEFLDKAENTGLKNWTIKNAIFITLTAPLYQESTQASQETGNQKAQG.

Residues 8–116 (RVQSKNYFLT…DGDTIEWGDF (109 aa)) enclose the CRESS-DNA virus Rep endonuclease domain. An RCR-1 motif is present at residues 15-18 (FLTY). A divalent metal cation contacts are provided by E49, H57, and H59. Residues 57-59 (HLH) carry the RCR-2 motif. Y103 functions as the For DNA cleavage activity in the catalytic mechanism. Residues 103–106 (YIDK) carry the RCR-3 motif. D107 is a binding site for a divalent metal cation. The segment at 143 to 153 (VQSALAVLREE) is binding to RBR1. An oligomerization region spans residues 156–176 (KDFVLQNHNIRSNLERIFAKA). 222–229 (GDSRTGKT) contacts ATP.

It belongs to the geminiviridae Rep protein family. As to quaternary structure, homooligomer. Interacts with the replication enhancer. protein (REn). Interacts with host retinoblastoma-related protein 1 (RBR1), and may thereby induce the transcription of host replicative enzymes even if the cell is not dividing anymore. Interacts with host PCNA. Interacts with host SCE1 protein. It depends on Mg(2+) as a cofactor. Requires Mn(2+) as cofactor.

It localises to the host nucleus. Functionally, essential for the replication of viral ssDNA. The closed circular ssDNA genome is first converted to a superhelical dsDNA. Rep binds a specific region at the genome origin of replication. It introduces an endonucleolytic nick within the conserved sequence 5'-TAATATTAC-3' in the intergenic region of the genome present in all geminiviruses, thereby initiating the rolling circle replication (RCR). Following cleavage, binds covalently to the 5'-phosphate of DNA as a tyrosyl ester. The cleavage gives rise to a free 3'-OH that serves as a primer for the cellular DNA polymerase. The polymerase synthesizes the (+) strand DNA by rolling circle mechanism. After one round of replication, a Rep-catalyzed nucleotidyl transfer reaction releases a circular single-stranded virus genome, thereby terminating the replication. Displays origin-specific DNA cleavage, nucleotidyl transferase, ATPase and helicase activities. In Nicotiana tabacum (Common tobacco), this protein is Replication-associated protein.